The chain runs to 761 residues: Probable ATP-dependent RNA helicase DDX20 (761 aa).

A Q motif motif is present at residues 26–54; sequence VEFSSLLLSKPVLEGLSASGFQRPSPIQL. Residues Arg-48, Gln-53, 70–77, and 73–78 each bind ATP; these read AKSGTGKT and GTGKTC. The Helicase ATP-binding domain occupies 57-231; that stretch reads IPLGRCGLDL…SRYMREPTFV (175 aa). Positions 175-178 match the DEAD box motif; it reads DEAD. In terms of domain architecture, Helicase C-terminal spans 266-415; that stretch reads SLLELFSKIP…PIPPGIMEEA (150 aa). Disordered stretches follow at residues 428-525 and 570-720; these read PKIP…KSHT and HDAH…EAGQ. Residues 443–456 show a composition bias toward basic and acidic residues; it reads KSEQMKSKPSRESH. Over residues 498-512 the composition is skewed to polar residues; that stretch reads QHDSTITQKQQNNTL. Low complexity-rich tracts occupy residues 600 to 613 and 623 to 635; these read SELSSEQKTSSESS and ESSSSVPSKSTLE. The span at 655–679 shows a compositional bias: polar residues; it reads TLPSTRVPQQATRSKQKPCQPQSQD. Residues 683–707 show a composition bias toward basic residues; the sequence is HHNLPHKHRTASKSSRRPTGPKRRT.

The protein belongs to the DEAD box helicase family. DDX20 subfamily. Part of the core SMN complex.

The protein localises to the cytoplasm. It localises to the nucleus. The enzyme catalyses ATP + H2O = ADP + phosphate + H(+). It carries out the reaction a ribonucleoside 5'-triphosphate + H2O = a ribonucleoside 5'-diphosphate + phosphate + H(+). Its function is as follows. The SMN complex catalyzes the assembly of small nuclear ribonucleoproteins (snRNPs), the building blocks of the spliceosome, and thereby plays an important role in the splicing of cellular pre-mRNAs. Most spliceosomal snRNPs contain a common set of Sm proteins SNRPB, SNRPD1, SNRPD2, SNRPD3, SNRPE, SNRPF and SNRPG that assemble in a heptameric protein ring on the Sm site of the small nuclear RNA to form the core snRNP (Sm core). In the cytosol, the Sm proteins SNRPD1, SNRPD2, SNRPE, SNRPF and SNRPG are trapped in an inactive 6S pICln-Sm complex by the chaperone CLNS1A that controls the assembly of the core snRNP. To assemble core snRNPs, the SMN complex accepts the trapped 5Sm proteins from CLNS1A forming an intermediate. Binding of snRNA inside 5Sm triggers eviction of the SMN complex, thereby allowing binding of SNRPD3 and SNRPB to complete assembly of the core snRNP. May also play a role in the metabolism of small nucleolar ribonucleoprotein (snoRNPs). The chain is Probable ATP-dependent RNA helicase DDX20 (ddx20) from Danio rerio (Zebrafish).